The primary structure comprises 291 residues: 3-hydroxy-5-phosphonooxypentane-2,4-dione thiolase (291 aa).

K203 serves as the catalytic Schiff-base intermediate with substrate.

Belongs to the DeoC/FbaB aldolase family. In terms of assembly, homodecamer.

Its subcellular location is the cytoplasm. It carries out the reaction dihydroxyacetone phosphate + acetyl-CoA = 3-hydroxy-2,4-dioxopentyl phosphate + CoA. Its function is as follows. Involved in the degradation of phospho-AI-2, thereby terminating induction of the lsr operon and closing the AI-2 signaling cycle. Catalyzes the transfer of an acetyl moiety from 3-hydroxy-5-phosphonooxypentane-2,4-dione to CoA to form glycerone phosphate and acetyl-CoA. The chain is 3-hydroxy-5-phosphonooxypentane-2,4-dione thiolase from Yersinia pestis bv. Antiqua (strain Antiqua).